Here is a 394-residue protein sequence, read N- to C-terminus: Phosphoglycerate kinase (394 aa).

Substrate is bound by residues 21-23 (DFN), Arg-36, 59-62 (HLGR), Arg-118, and Arg-151. Ser-183 carries the phosphoserine modification. Lys-201 and Gly-292 together coordinate ATP. A Phosphothreonine modification is found at Thr-299. ATP-binding positions include Glu-323 and 350-353 (GGDS).

It belongs to the phosphoglycerate kinase family. As to quaternary structure, monomer.

It localises to the cytoplasm. The enzyme catalyses (2R)-3-phosphoglycerate + ATP = (2R)-3-phospho-glyceroyl phosphate + ADP. Its pathway is carbohydrate degradation; glycolysis; pyruvate from D-glyceraldehyde 3-phosphate: step 2/5. The protein is Phosphoglycerate kinase of Bacillus cereus (strain ATCC 10987 / NRS 248).